The sequence spans 302 residues: Sulfate adenylyltransferase subunit 2 (302 aa).

The interval 280–302 (RQGRAIDHDQSGSMELKKRQGYF) is disordered.

Belongs to the PAPS reductase family. CysD subfamily. As to quaternary structure, heterodimer composed of CysD, the smaller subunit, and CysN.

The catalysed reaction is sulfate + ATP + H(+) = adenosine 5'-phosphosulfate + diphosphate. The protein operates within sulfur metabolism; hydrogen sulfide biosynthesis; sulfite from sulfate: step 1/3. Functionally, with CysN forms the ATP sulfurylase (ATPS) that catalyzes the adenylation of sulfate producing adenosine 5'-phosphosulfate (APS) and diphosphate, the first enzymatic step in sulfur assimilation pathway. APS synthesis involves the formation of a high-energy phosphoric-sulfuric acid anhydride bond driven by GTP hydrolysis by CysN coupled to ATP hydrolysis by CysD. This is Sulfate adenylyltransferase subunit 2 from Vibrio parahaemolyticus serotype O3:K6 (strain RIMD 2210633).